A 54-amino-acid polypeptide reads, in one-letter code: Ribulose bisphosphate carboxylase large chain (54 aa).

Positions 1 to 2 (MS) are excised as a propeptide. Residue proline 3 is modified to N-acetylproline. Lysine 14 bears the N6,N6,N6-trimethyllysine mark.

It belongs to the RuBisCO large chain family. Type I subfamily. As to quaternary structure, heterohexadecamer of 8 large chains and 8 small chains.

The protein localises to the plastid. The protein resides in the chloroplast. It carries out the reaction 2 (2R)-3-phosphoglycerate + 2 H(+) = D-ribulose 1,5-bisphosphate + CO2 + H2O. The catalysed reaction is D-ribulose 1,5-bisphosphate + O2 = 2-phosphoglycolate + (2R)-3-phosphoglycerate + 2 H(+). Functionally, ruBisCO catalyzes two reactions: the carboxylation of D-ribulose 1,5-bisphosphate, the primary event in carbon dioxide fixation, as well as the oxidative fragmentation of the pentose substrate in the photorespiration process. Both reactions occur simultaneously and in competition at the same active site. The polypeptide is Ribulose bisphosphate carboxylase large chain (rbcL) (Colletia hystrix (Crucifixion thorn)).